We begin with the raw amino-acid sequence, 198 residues long: Prostamide/prostaglandin F synthase (198 aa).

Tyrosine 108 carries the post-translational modification Phosphotyrosine.

Belongs to the peroxiredoxin-like PRXL2 family. Prostamide/prostaglandin F synthase subfamily.

It is found in the cytoplasm. It localises to the cytosol. The catalysed reaction is prostaglandin H2 + [thioredoxin]-dithiol = prostaglandin F2alpha + [thioredoxin]-disulfide. It carries out the reaction prostamide F2alpha + [thioredoxin]-disulfide = prostamide H2 + [thioredoxin]-dithiol. Functionally, catalyzes the reduction of prostaglandin-ethanolamide H(2) (prostamide H(2)) to prostamide F(2alpha) with NADPH as proton donor. Also able to reduce prostaglandin H(2) to prostaglandin F(2alpha). The sequence is that of Prostamide/prostaglandin F synthase from Homo sapiens (Human).